We begin with the raw amino-acid sequence, 596 residues long: Elongation factor 4 (596 aa).

In terms of domain architecture, tr-type G spans lysine 2–valine 184. GTP-binding positions include aspartate 14–threonine 19 and asparagine 131–aspartate 134.

Belongs to the TRAFAC class translation factor GTPase superfamily. Classic translation factor GTPase family. LepA subfamily.

It is found in the cell inner membrane. The enzyme catalyses GTP + H2O = GDP + phosphate + H(+). In terms of biological role, required for accurate and efficient protein synthesis under certain stress conditions. May act as a fidelity factor of the translation reaction, by catalyzing a one-codon backward translocation of tRNAs on improperly translocated ribosomes. Back-translocation proceeds from a post-translocation (POST) complex to a pre-translocation (PRE) complex, thus giving elongation factor G a second chance to translocate the tRNAs correctly. Binds to ribosomes in a GTP-dependent manner. In Shewanella frigidimarina (strain NCIMB 400), this protein is Elongation factor 4.